We begin with the raw amino-acid sequence, 71 residues long: Prophage lysis protein S homolog EssD (71 aa).

This sequence belongs to the lambda phage S protein family.

The sequence is that of Prophage lysis protein S homolog EssD (essD) from Escherichia coli (strain K12).